A 288-amino-acid chain; its full sequence is 4-hydroxybenzoate octaprenyltransferase (288 aa).

The next 7 helical transmembrane spans lie at 38–58 (IAAQ…GVFL), 98–120 (ILFA…MTIW), 141–161 (LLQV…FSAV), 163–183 (ESLP…SVIY), 213–233 (LIIG…GSLA), 238–258 (VYYI…KLMV), and 268–288 (AFLN…LSYL).

Belongs to the UbiA prenyltransferase family. Mg(2+) serves as cofactor.

The protein localises to the cell inner membrane. It carries out the reaction all-trans-octaprenyl diphosphate + 4-hydroxybenzoate = 4-hydroxy-3-(all-trans-octaprenyl)benzoate + diphosphate. It functions in the pathway cofactor biosynthesis; ubiquinone biosynthesis. Functionally, catalyzes the prenylation of para-hydroxybenzoate (PHB) with an all-trans polyprenyl group. Mediates the second step in the final reaction sequence of ubiquinone-8 (UQ-8) biosynthesis, which is the condensation of the polyisoprenoid side chain with PHB, generating the first membrane-bound Q intermediate 3-octaprenyl-4-hydroxybenzoate. The protein is 4-hydroxybenzoate octaprenyltransferase of Providencia stuartii.